A 331-amino-acid chain; its full sequence is CRISPR-associated endonuclease Cas1 (331 aa).

E155, H221, and E236 together coordinate Mn(2+).

This sequence belongs to the CRISPR-associated endonuclease Cas1 family. In terms of assembly, homodimer, forms a heterotetramer with a Cas2 homodimer. Mg(2+) serves as cofactor. Mn(2+) is required as a cofactor.

Functionally, CRISPR (clustered regularly interspaced short palindromic repeat), is an adaptive immune system that provides protection against mobile genetic elements (viruses, transposable elements and conjugative plasmids). CRISPR clusters contain spacers, sequences complementary to antecedent mobile elements, and target invading nucleic acids. CRISPR clusters are transcribed and processed into CRISPR RNA (crRNA). Acts as a dsDNA endonuclease. Involved in the integration of spacer DNA into the CRISPR cassette. The sequence is that of CRISPR-associated endonuclease Cas1 from Methanopyrus kandleri (strain AV19 / DSM 6324 / JCM 9639 / NBRC 100938).